The sequence spans 379 residues: Cytochrome b (379 aa).

The next 4 helical transmembrane spans lie at 33–53 (FGSLLGMCLMIQILTGLFLAM), 77–98 (WLIRYLHANGASMFFICLFIHV), 113–133 (WNIGIILFLTTMATAFVGYVL), and 178–198 (FFAFHFILPFIITAFVLVHLL). 2 residues coordinate heme b: His83 and His97. Residues His182 and His196 each contribute to the heme b site. An a ubiquinone-binding site is contributed by His201. The next 4 membrane-spanning stretches (helical) occupy residues 226 to 246 (IKDLLGILFLLTALMILALFF), 288 to 308 (LGGVLALLLSILILMAFPLLN), 320 to 340 (ITQTIYWILIANLLVLTWIGG), and 347 to 367 (FTMIGQIASITYFAIILILXP).

The protein belongs to the cytochrome b family. In terms of assembly, the cytochrome bc1 complex contains 11 subunits: 3 respiratory subunits (MT-CYB, CYC1 and UQCRFS1), 2 core proteins (UQCRC1 and UQCRC2) and 6 low-molecular weight proteins (UQCRH/QCR6, UQCRB/QCR7, UQCRQ/QCR8, UQCR10/QCR9, UQCR11/QCR10 and a cleavage product of UQCRFS1). This cytochrome bc1 complex then forms a dimer. It depends on heme b as a cofactor.

The protein localises to the mitochondrion inner membrane. Component of the ubiquinol-cytochrome c reductase complex (complex III or cytochrome b-c1 complex) that is part of the mitochondrial respiratory chain. The b-c1 complex mediates electron transfer from ubiquinol to cytochrome c. Contributes to the generation of a proton gradient across the mitochondrial membrane that is then used for ATP synthesis. This is Cytochrome b (MT-CYB) from Akodon toba (Chaco grass mouse).